Here is a 172-residue protein sequence, read N- to C-terminus: Putative F-box protein At3g13825 (172 aa).

In terms of domain architecture, F-box spans M1–A51.

This chain is Putative F-box protein At3g13825, found in Arabidopsis thaliana (Mouse-ear cress).